We begin with the raw amino-acid sequence, 388 residues long: Pectin acetylesterase 1 (388 aa).

Positions 1–24 (MKTLLYWGWSSLAGLILFSILAHG) are cleaved as a signal peptide. Residues asparagine 30 and asparagine 33 are each glycosylated (N-linked (GlcNAc...) asparagine). Catalysis depends on charge relay system residues serine 187 and aspartate 283. Asparagine 304 is a glycosylation site (N-linked (GlcNAc...) asparagine). Histidine 349 serves as the catalytic Charge relay system.

The protein belongs to the pectinacetylesterase family.

The protein localises to the secreted. It is found in the cell wall. Its function is as follows. Hydrolyzes acetyl esters in homogalacturonan regions of pectin. In type I primary cell wall, galacturonic acid residues of pectin can be acetylated at the O-2 and O-3 positions. Decreasing the degree of acetylation of pectin gels in vitro alters their physical properties. This is Pectin acetylesterase 1 from Arabidopsis thaliana (Mouse-ear cress).